The following is a 238-amino-acid chain: Type III pantothenate kinase (238 aa).

D6–K13 is an ATP binding site. Substrate-binding positions include Y90 and G97 to R100. D99 functions as the Proton acceptor in the catalytic mechanism. An ATP-binding site is contributed by T122. T172 serves as a coordination point for substrate.

This sequence belongs to the type III pantothenate kinase family. Homodimer. NH4(+) is required as a cofactor. K(+) serves as cofactor.

It localises to the cytoplasm. It carries out the reaction (R)-pantothenate + ATP = (R)-4'-phosphopantothenate + ADP + H(+). Its pathway is cofactor biosynthesis; coenzyme A biosynthesis; CoA from (R)-pantothenate: step 1/5. Its function is as follows. Catalyzes the phosphorylation of pantothenate (Pan), the first step in CoA biosynthesis. The polypeptide is Type III pantothenate kinase (Dechloromonas aromatica (strain RCB)).